The sequence spans 591 residues: Beta-fructofuranosidase, insoluble isoenzyme CWINV4 (591 aa).

A signal peptide spans 1–22 (MAISNVISVLLLLLVLINLSNQ). Substrate contacts are provided by residues 61-64 (WIND), Gln80, Trp88, and 123-124 (WS). Residue Asp64 is part of the active site. Residues Asn145 and Asn182 are each glycosylated (N-linked (GlcNAc...) asparagine). Residues 187–188 (RD), Glu242, and Asp276 each bind substrate. 3 N-linked (GlcNAc...) asparagine glycosylation sites follow: Asn336, Asn472, and Asn565. A disulfide bridge links Cys436 with Cys484.

It belongs to the glycosyl hydrolase 32 family. In terms of tissue distribution, expressed in flowers, and seeds, and, to a lower extent, in seedlings.

Its subcellular location is the secreted. The protein resides in the extracellular space. It is found in the apoplast. The protein localises to the cell wall. The catalysed reaction is Hydrolysis of terminal non-reducing beta-D-fructofuranoside residues in beta-D-fructofuranosides.. This is Beta-fructofuranosidase, insoluble isoenzyme CWINV4 (CWINV4) from Arabidopsis thaliana (Mouse-ear cress).